The primary structure comprises 223 residues: Shematrin-like protein 2 (223 aa).

The first 19 residues, 1–19 (MRILANLILLGVLFGVCLC), serve as a signal peptide directing secretion.

In terms of tissue distribution, prismatic layer of shell (at protein level).

It is found in the secreted. The protein is Shematrin-like protein 2 of Margaritifera margaritifera (Freshwater pearl mussel).